The following is a 181-amino-acid chain: Protein Syd (181 aa).

It belongs to the Syd family.

The protein resides in the cell inner membrane. In terms of biological role, interacts with the SecY protein in vivo. May bind preferentially to an uncomplexed state of SecY, thus functioning either as a chelating agent for excess SecY in the cell or as a regulatory factor that negatively controls the translocase function. The polypeptide is Protein Syd (Shigella dysenteriae serotype 1 (strain Sd197)).